Reading from the N-terminus, the 293-residue chain is Diaminopimelate epimerase (293 aa).

The substrate site is built by N17, Q47, and N67. The Proton donor role is filled by C76. Substrate is bound by residues G77–N78, N164, N197, and E215–R216. Catalysis depends on C224, which acts as the Proton acceptor. G225–S226 is a binding site for substrate.

The protein belongs to the diaminopimelate epimerase family. In terms of assembly, homodimer.

Its subcellular location is the cytoplasm. The enzyme catalyses (2S,6S)-2,6-diaminopimelate = meso-2,6-diaminopimelate. It functions in the pathway amino-acid biosynthesis; L-lysine biosynthesis via DAP pathway; DL-2,6-diaminopimelate from LL-2,6-diaminopimelate: step 1/1. Functionally, catalyzes the stereoinversion of LL-2,6-diaminopimelate (L,L-DAP) to meso-diaminopimelate (meso-DAP), a precursor of L-lysine and an essential component of the bacterial peptidoglycan. The polypeptide is Diaminopimelate epimerase (Rhodopseudomonas palustris (strain HaA2)).